The sequence spans 392 residues: tRNA-specific 2-thiouridylase MnmA (392 aa).

Residues 18 to 25 and M44 contribute to the ATP site; that span reads GMSGGVDS. Residues 104 to 106 are interaction with target base in tRNA; that stretch reads NPD. The active-site Nucleophile is the C109. Cysteines 109 and 208 form a disulfide. G133 contacts ATP. The interaction with tRNA stretch occupies residues 158 to 160; it reads KDQ. Residue C208 is the Cysteine persulfide intermediate of the active site. Positions 320 to 321 are interaction with tRNA; sequence RY.

Belongs to the MnmA/TRMU family.

It is found in the cytoplasm. The enzyme catalyses S-sulfanyl-L-cysteinyl-[protein] + uridine(34) in tRNA + AH2 + ATP = 2-thiouridine(34) in tRNA + L-cysteinyl-[protein] + A + AMP + diphosphate + H(+). Catalyzes the 2-thiolation of uridine at the wobble position (U34) of tRNA, leading to the formation of s(2)U34. This chain is tRNA-specific 2-thiouridylase MnmA, found in Marinobacter nauticus (strain ATCC 700491 / DSM 11845 / VT8) (Marinobacter aquaeolei).